Here is a 473-residue protein sequence, read N- to C-terminus: ATP synthase subunit beta (473 aa).

158–165 (GGAGVGKT) contributes to the ATP binding site.

It belongs to the ATPase alpha/beta chains family. As to quaternary structure, F-type ATPases have 2 components, CF(1) - the catalytic core - and CF(0) - the membrane proton channel. CF(1) has five subunits: alpha(3), beta(3), gamma(1), delta(1), epsilon(1). CF(0) has three main subunits: a(1), b(2) and c(9-12). The alpha and beta chains form an alternating ring which encloses part of the gamma chain. CF(1) is attached to CF(0) by a central stalk formed by the gamma and epsilon chains, while a peripheral stalk is formed by the delta and b chains.

It is found in the cell membrane. It catalyses the reaction ATP + H2O + 4 H(+)(in) = ADP + phosphate + 5 H(+)(out). Functionally, produces ATP from ADP in the presence of a proton gradient across the membrane. The catalytic sites are hosted primarily by the beta subunits. This is ATP synthase subunit beta from Bacillus pumilus (strain SAFR-032).